The primary structure comprises 398 residues: Mu-type opioid receptor (398 aa).

Residues 1 to 66 (MDSSTGPGNT…CPQTGSPSMV (66 aa)) lie on the Extracellular side of the membrane. N-linked (GlcNAc...) asparagine glycans are attached at residues Asn-9, Asn-31, Asn-38, Asn-46, and Asn-53. The chain crosses the membrane as a helical span at residues 67–91 (TAITIMALYSIVCVVGLFGNFLVMY). Over 92 to 104 (VIVRYTKMKTATN) the chain is Cytoplasmic. The helical transmembrane segment at 105-129 (IYIFNLALADALATSTLPFQSVNYL) threads the bilayer. Residues 130 to 140 (MGTWPFGTILC) lie on the Extracellular side of the membrane. Cys-140 and Cys-217 are oxidised to a cystine. A helical transmembrane segment spans residues 141–163 (KIVISIDYYNMFTSIFTLCTMSV). Residues 164–183 (DRYIAVCHPVKALDFRTPRN) are Cytoplasmic-facing. Tyr-166 carries the phosphotyrosine modification. A helical transmembrane segment spans residues 184-205 (AKIVNVCNWILSSAIGLPVMFM). At 206-228 (ATTKYRQGSIDCTLTFSHPTWYW) the chain is on the extracellular side. Residues 229-253 (ENLLKICVFIFAFIMPVLIITVCYG) traverse the membrane as a helical segment. At 254–277 (LMILRLKSVRMLSGSKEKDRNLRR) the chain is on the cytoplasmic side. Residues 278-304 (ITRMVLVVVAVFIVCWTPIHIYVIIKA) traverse the membrane as a helical segment. The Extracellular portion of the chain corresponds to 305-312 (LITIPETT). Residues 313-336 (FQTVSWHFCIALGYTNSCLNPVLY) traverse the membrane as a helical segment. Residues 332–336 (NPVLY) carry the NPxxY; plays a role in stabilizing the activated conformation of the receptor motif. Over 337 to 398 (AFLDENFKRC…NLEAETAPLP (62 aa)) the chain is Cytoplasmic. Cys-351 is lipidated: S-palmitoyl cysteine. Positions 361–385 (QNSTRVRQNTREHPSTANTVDRTNH) are disordered. Phosphoserine is present on Ser-363. Thr-370 carries the phosphothreonine modification. Position 375 is a phosphoserine (Ser-375). Phosphothreonine is present on Thr-394.

The protein belongs to the G-protein coupled receptor 1 family. Forms homooligomers and heterooligomers with other GPCRs, such as OPRD1, OPRK1, OPRL1, NPFFR2, ADRA2A, SSTR2, CNR1 and CCR5 (probably in dimeric forms). Interacts with heterotrimeric G proteins; interaction with a heterotrimeric complex containing GNAI1, GNB1 and GNG2 stabilizes the active conformation of the receptor and increases its affinity for endomorphin-2, the synthetic opioid peptide DAMGO and for morphinan agonists. Interacts with PPL; the interaction disrupts agonist-mediated G-protein activation. Interacts (via C-terminus) with DNAJB4 (via C-terminus). Interacts with calmodulin; the interaction inhibits the constitutive activity of OPRM1; it abolishes basal and attenuates agonist-stimulated G-protein coupling. Interacts with FLNA, PLD2, RANBP9 and WLS and GPM6A. Interacts with RTP4. Interacts with SYP and GNAS. Interacts with RGS9, RGS17, RGS20, RGS4, PPP1R9B and HINT1. In terms of processing, phosphorylated. Differentially phosphorylated in basal and agonist-induced conditions. Agonist-mediated phosphorylation modulates receptor internalization. Phosphorylated by GRK2 in a agonist-dependent manner. Phosphorylation at Tyr-166 requires receptor activation, is dependent on non-receptor protein tyrosine kinase Src and results in a decrease in agonist efficacy by reducing G-protein coupling efficiency. Phosphorylated on tyrosine residues; the phosphorylation is involved in agonist-induced G-protein-independent receptor down-regulation. Phosphorylation at Ser-375 is involved in G-protein-dependent but not beta-arrestin-dependent activation of the ERK pathway. Post-translationally, ubiquitinated. A basal ubiquitination seems not to be related to degradation. Ubiquitination is increased upon formation of OPRM1:OPRD1 oligomers leading to proteasomal degradation; the ubiquitination is diminished by RTP4. In terms of tissue distribution, brain. Is expressed in the cerebral cortex, caudate putamen, nucleus accumbens, septal nuclei, thalamus, hippocampus, and habenula. Not detected in cerebellum.

The protein resides in the cell membrane. It localises to the cell projection. It is found in the axon. Its subcellular location is the perikaryon. The protein localises to the dendrite. The protein resides in the endosome. Its function is as follows. Receptor for endogenous opioids such as beta-endorphin and endomorphin. Receptor for natural and synthetic opioids including morphine, heroin, DAMGO, fentanyl, etorphine, buprenorphin and methadone. Also activated by enkephalin peptides, such as Met-enkephalin or Met-enkephalin-Arg-Phe, with higher affinity for Met-enkephalin-Arg-Phe. Agonist binding to the receptor induces coupling to an inactive GDP-bound heterotrimeric G-protein complex and subsequent exchange of GDP for GTP in the G-protein alpha subunit leading to dissociation of the G-protein complex with the free GTP-bound G-protein alpha and the G-protein beta-gamma dimer activating downstream cellular effectors. The agonist- and cell type-specific activity is predominantly coupled to pertussis toxin-sensitive G(i) and G(o) G alpha proteins, GNAI1, GNAI2, GNAI3 and GNAO1 isoforms Alpha-1 and Alpha-2, and to a lesser extent to pertussis toxin-insensitive G alpha proteins GNAZ and GNA15. They mediate an array of downstream cellular responses, including inhibition of adenylate cyclase activity and both N-type and L-type calcium channels, activation of inward rectifying potassium channels, mitogen-activated protein kinase (MAPK), phospholipase C (PLC), phosphoinositide/protein kinase (PKC), phosphoinositide 3-kinase (PI3K) and regulation of NF-kappa-B. Also couples to adenylate cyclase stimulatory G alpha proteins. The selective temporal coupling to G-proteins and subsequent signaling can be regulated by RGSZ proteins, such as RGS9, RGS17 and RGS4. Phosphorylation by members of the GPRK subfamily of Ser/Thr protein kinases and association with beta-arrestins is involved in short-term receptor desensitization. Beta-arrestins associate with the GPRK-phosphorylated receptor and uncouple it from the G-protein thus terminating signal transduction. The phosphorylated receptor is internalized through endocytosis via clathrin-coated pits which involves beta-arrestins. The activation of the ERK pathway occurs either in a G-protein-dependent or a beta-arrestin-dependent manner and is regulated by agonist-specific receptor phosphorylation. Acts as a class A G-protein coupled receptor (GPCR) which dissociates from beta-arrestin at or near the plasma membrane and undergoes rapid recycling. Receptor down-regulation pathways are varying with the agonist and occur dependent or independent of G-protein coupling. Endogenous ligands induce rapid desensitization, endocytosis and recycling. Heterooligomerization with other GPCRs can modulate agonist binding, signaling and trafficking properties. This is Mu-type opioid receptor (Oprm1) from Rattus norvegicus (Rat).